A 188-amino-acid polypeptide reads, in one-letter code: Putative nucleotidase OB0422 (188 aa).

The protein belongs to the 5'(3')-deoxyribonucleotidase family.

This Oceanobacillus iheyensis (strain DSM 14371 / CIP 107618 / JCM 11309 / KCTC 3954 / HTE831) protein is Putative nucleotidase OB0422.